The following is a 90-amino-acid chain: Probable Fe(2+)-trafficking protein (90 aa).

It belongs to the Fe(2+)-trafficking protein family.

In terms of biological role, could be a mediator in iron transactions between iron acquisition and iron-requiring processes, such as synthesis and/or repair of Fe-S clusters in biosynthetic enzymes. The polypeptide is Probable Fe(2+)-trafficking protein (Nitrosococcus oceani (strain ATCC 19707 / BCRC 17464 / JCM 30415 / NCIMB 11848 / C-107)).